Reading from the N-terminus, the 804-residue chain is Mechanosensitive cation channel TMEM63A (804 aa).

The Extracellular portion of the chain corresponds to 1-51 (MTSSPFLDPWPSKAVFVRERLGLGERPNDSYCYNSAKNSTVLQGVTFGGIP). Asn38 is a glycosylation site (N-linked (GlcNAc...) asparagine). Residues 52–74 (TVLLLDVSCFLFLILVFSIIRRR) form a helical membrane-spanning segment. Residues 75-133 (FWDYGRIALVSEAGSEARFQRLSSSSSGQQDFENELGCCPWLTAIFRLHDDQILEWCGE) lie on the Cytoplasmic side of the membrane. The helical transmembrane segment at 134 to 166 (DAIHYLSFQRHIIFLLVVISFLSLCVILPVNLS) threads the bilayer. Topologically, residues 167 to 190 (GDLLGKDPYSFGRTTIANLQTDND) are extracellular. A helical transmembrane segment spans residues 191–216 (LLWLHTVFSVIYLFLTVGFMWHHTRS). At 217-415 (IRYKEESLVR…CWKNLSIQGV (199 aa)) the chain is on the cytoplasmic side. The intracellular linker IL2; confers mechanosensitivity stretch occupies residues 218-413 (RYKEESLVRQ…DICWKNLSIQ (196 aa)). Residues 416–443 (RWWLQWLGINFSLFVVLFFLTTPSIIMS) form a helical membrane-spanning segment. Residues 444–461 (TMDKFNVTKPIHALNNPV) lie on the Extracellular side of the membrane. A glycan (N-linked (GlcNAc...) asparagine) is linked at Asn449. The helical transmembrane segment at 462–489 (ISQFFPTLLLWSFSALLPSIVYYSTLLE) threads the bilayer. Residues 490–494 (SHWTR) lie on the Cytoplasmic side of the membrane. Residues 495-531 (SGENRIMVSKVYIFLIFMVLILPSLGLTSLDFFFRWL) form a helical membrane-spanning segment. Residues 532-553 (FDKTSSETSIRLECVFLPDQGA) lie on the Extracellular side of the membrane. The helical transmembrane segment at 554-585 (FFVNYVIASAFIGSGMELLRLPGLILYTFRMI) threads the bilayer. A gating helix region spans residues 554-585 (FFVNYVIASAFIGSGMELLRLPGLILYTFRMI). Over 586-605 (MAKTAADRRNVKQNQAFEYE) the chain is Cytoplasmic. The helical transmembrane segment at 606–623 (FGAMYAWMLCVFTVIMAY) threads the bilayer. The Extracellular portion of the chain corresponds to 624–627 (SITC). The chain crosses the membrane as a helical span at residues 628–650 (PIIVPFGLIYILLKHMVDRHNLY). Over 651–660 (FAYLPAKLEK) the chain is Cytoplasmic. A helical membrane pass occupies residues 661 to 688 (RIHFAAVNQALAAPILCLFWLFFFSFLR). The Extracellular portion of the chain corresponds to 689–693 (LGLTA). A helical transmembrane segment spans residues 694-708 (PATLFTFLVVLLTIL). Over 709 to 804 (ACLLYTCFGC…GTAAYAYQES (96 aa)) the chain is Cytoplasmic. Ser738 carries the post-translational modification Phosphoserine.

The protein belongs to the CSC1 (TC 1.A.17) family. As to quaternary structure, monomer. Post-translationally, N-Glycosylated.

Its subcellular location is the lysosome membrane. The protein localises to the early endosome membrane. The protein resides in the cell membrane. It carries out the reaction Ca(2+)(in) = Ca(2+)(out). In terms of biological role, mechanosensitive cation channel with low conductance and high activation threshold. In contrast to TMEM63B, does not show phospholipid scramblase activity. Acts as a regulator of lysosomal morphology by mediating lysosomal mechanosensitivity. Important for the baby's first breath and respiration throughout life. Upon lung inflation conducts cation currents in alveolar type 1 and 2 cells triggering lamellar body exocytosis and surfactant secretion into airspace. Also acts as an osmosensitive cation channel preferentially activated by hypotonic stress. The sequence is that of Mechanosensitive cation channel TMEM63A from Mus musculus (Mouse).